The sequence spans 679 residues: MSAPKNEMYYSLLEWFKTLNLNAPHADAESLADGVALAQALNQFAPESFTDAWLSKIKASAVGSNWRLRMSNLKKVTQSVYDYYSDVLNYSLSDFSKPDLQSIAEKCDLGELERLLQLVLGCAVNCAEKQSYITEIMCLEEELQANIMRALQELEATRQASSAEGGVVSSLSRSSRTGNLDSKAVQEDRDALAQKCFETEKKMLLLIDEKTNLQQELHKLQQEFSRLEQHSTVIGDDGVSLGPVQTGSVRYNELRRQLDLLKEELLHSEGAREDLKLKAQQQDTDLLHMQMRIEELMKSSAEVTTLKDEVDVLRESNDKLKICEAQLDTYKKKLEDYNDLKKQVKILEERSADYVQQNAQFEEDAKRYANTKGQVELFKKEIQDLHAKLDAESSKNVKLEFDNKNLEGKNLALQRAKDSLLKERDNLREAVDELKCGQLSSNTALTGTTVSREMQPSATVEKLQRLEAENKALREGQGGQTALAQLLDDANKRCENLREQLKTANERILSLSHASQSDDPILKESEFGKQIKQLMELNEQKTLQLEEAVTQSTSLQCKVTQLETNLSAREQEILVYDAKYRKCVEKAKEVIKSIDPRIASALDASVLEKSSDLVEEEPKPKMSVMEEQLMTSAFYRLGVNAQRDAIDSKLAILMGSGQTFLARQRQSAPRKSLSAMKSK.

Residues 6–123 enclose the Calponin-homology (CH) domain; the sequence is NEMYYSLLEW…RLLQLVLGCA (118 aa). Coiled coils occupy residues 135 to 437 and 480 to 574; these read EIMC…LKCG and QTAL…QEIL.

This sequence belongs to the hook family. As to quaternary structure, homodimer. Interacts with microtubules via its N-terminus.

The protein resides in the cytoplasm. It is found in the cytoskeleton. It localises to the endosome. The protein localises to the synapse. Functionally, involved in endocytic trafficking by stabilizing organelles of the endocytic pathway. Probably acts as a cytoskeletal linker protein required to tether endosome vesicles to the cytoskeleton. Involved in modulation of endocytosis at stages required for down-regulation of membrane proteins that control synapse size. Not involved in synaptic vesicle recycling. Required in R7 cells for boss endocytosis into multivesicular bodies (MVBs). Has a role in regulating adult longevity. This chain is Protein hook, found in Drosophila erecta (Fruit fly).